The chain runs to 143 residues: Nucleoside diphosphate kinase (143 aa).

Residues lysine 11, phenylalanine 59, arginine 87, threonine 93, arginine 104, and asparagine 114 each contribute to the ATP site. Histidine 117 (pros-phosphohistidine intermediate) is an active-site residue.

The protein belongs to the NDK family. As to quaternary structure, homotetramer. The cofactor is Mg(2+).

It localises to the cytoplasm. It carries out the reaction a 2'-deoxyribonucleoside 5'-diphosphate + ATP = a 2'-deoxyribonucleoside 5'-triphosphate + ADP. The catalysed reaction is a ribonucleoside 5'-diphosphate + ATP = a ribonucleoside 5'-triphosphate + ADP. Its function is as follows. Major role in the synthesis of nucleoside triphosphates other than ATP. The ATP gamma phosphate is transferred to the NDP beta phosphate via a ping-pong mechanism, using a phosphorylated active-site intermediate. This Sodalis glossinidius (strain morsitans) protein is Nucleoside diphosphate kinase.